We begin with the raw amino-acid sequence, 396 residues long: L-lactate dehydrogenase (396 aa).

The FMN hydroxy acid dehydrogenase domain maps to 1–380 (MIISAASDYR…TQDSLVQGLG (380 aa)). Tyrosine 24 is a substrate binding site. Serine 106 and glutamine 127 together coordinate FMN. Position 129 (tyrosine 129) interacts with substrate. Residue threonine 155 participates in FMN binding. Arginine 164 serves as a coordination point for substrate. FMN is bound at residue lysine 251. Histidine 275 functions as the Proton acceptor in the catalytic mechanism. Substrate is bound at residue arginine 278. 306–330 (DSGIRNGLDVVRMIALGADTVLLGR) lines the FMN pocket.

It belongs to the FMN-dependent alpha-hydroxy acid dehydrogenase family. FMN is required as a cofactor.

It is found in the cell inner membrane. The enzyme catalyses (S)-lactate + A = pyruvate + AH2. Functionally, catalyzes the conversion of L-lactate to pyruvate. Is coupled to the respiratory chain. This is L-lactate dehydrogenase from Shigella dysenteriae serotype 1 (strain Sd197).